Consider the following 421-residue polypeptide: CinA-like protein (421 aa).

The protein belongs to the CinA family.

The sequence is that of CinA-like protein from Synechococcus sp. (strain ATCC 27144 / PCC 6301 / SAUG 1402/1) (Anacystis nidulans).